Consider the following 368-residue polypeptide: Germination protease (368 aa).

A propeptide spanning residues 1 to 16 (MEKKKLDLSQYAVRTD) is cleaved from the precursor.

The protein belongs to the peptidase A25 family. As to quaternary structure, homotetramer. In terms of processing, autoproteolytically processed. The inactive tetrameric zymogen termed p46 autoprocesses to a smaller form termed p41, which is active only during spore germination.

It carries out the reaction Endopeptidase action with P4 Glu or Asp, P1 preferably Glu &gt; Asp, P1' hydrophobic and P2' Ala.. Its function is as follows. Initiates the rapid degradation of small, acid-soluble proteins during spore germination. This is Germination protease from Bacillus licheniformis (strain ATCC 14580 / DSM 13 / JCM 2505 / CCUG 7422 / NBRC 12200 / NCIMB 9375 / NCTC 10341 / NRRL NRS-1264 / Gibson 46).